The chain runs to 114 residues: Aspartate 1-decarboxylase (114 aa).

S25 functions as the Schiff-base intermediate with substrate; via pyruvic acid in the catalytic mechanism. S25 is modified (pyruvic acid (Ser)). T57 contributes to the substrate binding site. Y58 serves as the catalytic Proton donor. Substrate is bound at residue 73–75; it reads GAA.

Belongs to the PanD family. Heterooctamer of four alpha and four beta subunits. Pyruvate is required as a cofactor. In terms of processing, is synthesized initially as an inactive proenzyme, which is activated by self-cleavage at a specific serine bond to produce a beta-subunit with a hydroxyl group at its C-terminus and an alpha-subunit with a pyruvoyl group at its N-terminus.

It is found in the cytoplasm. The catalysed reaction is L-aspartate + H(+) = beta-alanine + CO2. It functions in the pathway cofactor biosynthesis; (R)-pantothenate biosynthesis; beta-alanine from L-aspartate: step 1/1. Its function is as follows. Catalyzes the pyruvoyl-dependent decarboxylation of aspartate to produce beta-alanine. This chain is Aspartate 1-decarboxylase, found in Thermotoga petrophila (strain ATCC BAA-488 / DSM 13995 / JCM 10881 / RKU-1).